A 161-amino-acid polypeptide reads, in one-letter code: Glycine-rich RNA-binding protein blt801 (161 aa).

The 79-residue stretch at 6–84 (YRCFVGGLRW…RNITVNEAQS (79 aa)) folds into the RRM domain. The tract at residues 72–161 (LDGRNITVNE…GGSGGGNWRE (90 aa)) is disordered. At Ser-87 the chain carries Phosphoserine; by PKA. Over residues 89–161 (GGGGFGGGGG…GGSGGGNWRE (73 aa)) the composition is skewed to gly residues.

Binds single-stranded DNA and homoribopolymers of guanine, uracil and adenine, but not cytosine. Also binds RNA, with a preference for RNA containing a high proportion of adenine within an open loop structure. Possibly has a role in RNA transcription or processing during stress. This chain is Glycine-rich RNA-binding protein blt801, found in Hordeum vulgare (Barley).